The sequence spans 232 residues: GTP cyclohydrolase III (232 aa).

The protein belongs to the archaeal-type GTP cyclohydrolase family.

It catalyses the reaction GTP + 3 H2O = 2-amino-5-formylamino-6-(5-phospho-D-ribosylamino)pyrimidin-4(3H)-one + 2 phosphate + 2 H(+). Its function is as follows. Catalyzes the formation of 2-amino-5-formylamino-6-ribofuranosylamino-4(3H)-pyrimidinone ribonucleotide monophosphate and inorganic phosphate from GTP. Also has an independent pyrophosphate phosphohydrolase activity. In Saccharolobus islandicus (strain Y.G.57.14 / Yellowstone #1) (Sulfolobus islandicus), this protein is GTP cyclohydrolase III.